The following is a 472-amino-acid chain: Arabinose-proton symporter (472 aa).

Topologically, residues 1 to 29 (MVTINTESALTPRSLRDTRRMNMFVSVAA) are cytoplasmic. Residues 30–50 (AVAGLLFGLDIGVIAGALPFI) traverse the membrane as a helical segment. Topologically, residues 51 to 63 (TDHFVLTSRLQEW) are periplasmic. The helical transmembrane segment at 64–84 (VVSSMMLGAAIGALFNGWLSF) threads the bilayer. The Cytoplasmic segment spans residues 85 to 91 (RLGRKYS). The chain crosses the membrane as a helical span at residues 92 to 112 (LMAGAILFVLGSIGSAFATSV). Over 113–114 (EM) the chain is Periplasmic. Residues 115–135 (LIAARVVLGIAVGIASYTAPL) traverse the membrane as a helical segment. Topologically, residues 136-154 (YLSEMASENVRGKMISMYQ) are cytoplasmic. Residues 155–175 (LMVTLGIVLAFLSDTAFSYSG) traverse the membrane as a helical segment. Residues 176–178 (NWR) lie on the Periplasmic side of the membrane. Residues 179 to 199 (AMLGVLALPAVLLIILVVFLP) traverse the membrane as a helical segment. The Cytoplasmic portion of the chain corresponds to 200-257 (NSPRWLAEKGRHIEAEEVLRMLRDTSEKAREELNEIRESLKLKQGGWALFKINRNVRR). A helical transmembrane segment spans residues 258–278 (AVFLGMLLQAMQQFTGMNIIM). Topologically, residues 279 to 297 (YYAPRIFKMAGFTTTEQQM) are periplasmic. Residues 298-318 (IATLVVGLTFMFATFIAVFTV) traverse the membrane as a helical segment. Topologically, residues 319 to 325 (DKAGRKP) are cytoplasmic. The helical transmembrane segment at 326–346 (ALKIGFSVMALGTLVLGYCLM) threads the bilayer. The Periplasmic segment spans residues 347–361 (QFDNGTASSGLSWLS). The helical transmembrane segment at 362–382 (VGMTMMCIAGYAMSAAPVVWI) threads the bilayer. Over 383-404 (LCSEIQPLKCRDFGITCSTTTN) the chain is Cytoplasmic. 2 consecutive transmembrane segments (helical) span residues 405 to 425 (WVSNMIIGATFLTLLDSIGAA) and 426 to 446 (GTFWLYTALNIAFVGITFWLI). The Cytoplasmic segment spans residues 447 to 472 (PETKNVTLEHIERKLMAGEKLRNIGV).

The protein belongs to the major facilitator superfamily. Sugar transporter (TC 2.A.1.1) family.

Its subcellular location is the cell inner membrane. The enzyme catalyses L-arabinose(in) + H(+)(in) = L-arabinose(out) + H(+)(out). Uptake of L-arabinose across the cytoplasmic membrane with the concomitant transport of protons into the cell (symport system). In Escherichia coli O157:H7, this protein is Arabinose-proton symporter (araE).